An 822-amino-acid polypeptide reads, in one-letter code: Sodium/hydrogen exchanger 1 (822 aa).

Residues 1–102 (MMLRWSGIWG…FPVLDIDYLH (102 aa)) are Extracellular-facing. The disordered stretch occupies residues 41-73 (SPTANTIRGAEPPRERSIGDVTTAPSEPVHHPD). The helical transmembrane segment at 103-125 (VRTPFEISLWILLACLMKIGFHV) threads the bilayer. Residues 126-134 (IPTISSIVP) lie on the Cytoplasmic side of the membrane. The helical transmembrane segment at 135-152 (ESCLLIVVGLLVGGLIKG) threads the bilayer. Residues 153-162 (VGETPPFLQS) are Extracellular-facing. A helical transmembrane segment spans residues 163–180 (DVFFLFLLPPIILDAGYF). Over 181–190 (LPLRQFTENL) the chain is Cytoplasmic. A helical membrane pass occupies residues 191 to 219 (GTILIFAVVGTLWNAFFLGGLLYAVCLVG). The Extracellular portion of the chain corresponds to 220–226 (GEQINNI). A helical transmembrane segment spans residues 227–253 (GLLDTLLFGSIISAVDPVAVVAVFEEI). Topologically, residues 254–256 (HIN) are cytoplasmic. A helical membrane pass occupies residues 257 to 287 (ELLHILVFGESLLNDAVTVVLYHLFEEFANY). The Extracellular segment spans residues 288 to 291 (DSIG). A helical membrane pass occupies residues 292 to 326 (ISDIFLGFLSFFVVALGGVFVGVVYGVIAAFTSRF). Residues 327–332 (TSHIRV) lie on the Cytoplasmic side of the membrane. The chain crosses the membrane as a helical span at residues 333–345 (IEPLFVFLYSYMA). The Extracellular portion of the chain corresponds to 346 to 354 (YLSAELFHL). A helical transmembrane segment spans residues 355 to 375 (SGIMALIASGVVMRPYVEANI). The Cytoplasmic segment spans residues 376 to 377 (SH). Residues 378 to 408 (KSHTTIKYFLKMWSSVSETLIFIFLGVSTVA) traverse the membrane as a helical segment. At 409–414 (GSHQWN) the chain is on the extracellular side. Residues 415–442 (WTFVISTLLFCLIARVLGVLVLTWFINK) form a helical membrane-spanning segment. The Cytoplasmic segment spans residues 443-448 (FRIVKL). A helical membrane pass occupies residues 449–473 (TPKDQFIIAYGGLRGAIAFSLGYLM). The Extracellular portion of the chain corresponds to 474-479 (DKKHFP). A helical membrane pass occupies residues 480 to 509 (MCDLFLTAIITVIFFTVFVQGMTIRPLVDL). Residues 507–549 (VDLLAVKKKQETKRSINEEIHTQFLDHLLTGIEDICGHYGHHH) form an interaction with TESC region. Residues 510–822 (LAVKKKQETK…EGEPFIPKGE (313 aa)) lie on the Cytoplasmic side of the membrane. A PI(4,5)P2-binding region region spans residues 513–520 (KKKQETKR). An interaction with CHP2 region spans residues 519-549 (KRSINEEIHTQFLDHLLTGIEDICGHYGHHH). The interval 544 to 549 (HYGHHH) is confers pH-dependent PI(4,5)P2 binding. The tract at residues 556–564 (RFNKKYVKK) is PI(4,5)P2-binding region. Phosphoserine occurs at positions 603 and 606. A Phosphothreonine modification is found at Thr607. 2 positions are modified to phosphoserine: Ser609 and Ser652. The interaction with TESC stretch occupies residues 637 to 822 (KILRSNLQKT…EGEPFIPKGE (186 aa)). Positions 637–822 (KILRSNLQKT…EGEPFIPKGE (186 aa)) are interaction with CALM1. Residues 688–691 (LTVP) form an interaction with PPP3CA region. Phosphoserine occurs at positions 697, 701, and 707. The interval 719–724 (PVITID) is interaction with PPP3CA. Residues Ser727, Ser730, and Ser733 each carry the phosphoserine modification. The tract at residues 752-822 (PTRLTRGEED…EGEPFIPKGE (71 aa)) is disordered. Thr756 is modified (phosphothreonine). Acidic residues predominate over residues 759 to 768 (EEDEDEDEDG). Thr786 bears the Phosphothreonine mark. Phosphoserine occurs at positions 792, 794, and 803.

The protein belongs to the monovalent cation:proton antiporter 1 (CPA1) transporter (TC 2.A.36) family. In terms of assembly, homodimer; dimerization is crucial for its function. Oligomer. Interacts with CALM in a calcium-dependent manner. Interacts with TESC. Interacts (via the juxtamembrane region of the cytoplasmic C-terminal domain) with CHP1; the interaction occurs at the plasma membrane in a calcium-dependent manner. Interacts with CHP2; the interaction occurs in a calcium-dependent manner. Interacts with EZR; regulates the cytoskeletal interactions of SLC9A1 and promotes stress fiber formation. Post-translationally, ubiquitinated, leading to its degradation by the proteasome. Ubiquitination is reduced by CHP1. O-glycosylated. In terms of processing, palmitoylated; may play a major role in SLC9A1 regulation. Post-translationally, phosphorylation at Thr-786 increases SLC9A1 activity. Specifically dephosphorylated at Thr-786 by PPP3CA that negatively regulates SLC9A1 activity. Phosphorylation at Ser-652 by AKT1 reduces SLC9A1 binding to CALM1.

The protein resides in the cell membrane. It is found in the basolateral cell membrane. It carries out the reaction Na(+)(in) + H(+)(out) = Na(+)(out) + H(+)(in). The enzyme catalyses Li(+)(out) + H(+)(in) = Li(+)(in) + H(+)(out). It catalyses the reaction Li(+)(in) + Na(+)(out) = Li(+)(out) + Na(+)(in). With respect to regulation, activated at acidic pHs. Inhibited by amiloride and 5-amino-substituted derivatives. Inhibited by cariporide and eniporide. Phosphatidylinositol 4,5-bisphosphate (PI(4,5)P2) and phosphatidylinositol 3,4,5-trisphosphate (PI(3,4,5)P3) bind and differentially regulate SLC9A1 activity. Its function is as follows. Electroneutral Na(+) /H(+) antiporter that extrudes Na(+) in exchange for external protons driven by the inward sodium ion chemical gradient, protecting cells from acidification that occurs from metabolism. Exchanges intracellular H(+) ions for extracellular Na(+) in 1:1 stoichiometry. Plays a key role in maintening intracellular pH neutral and cell volume, and thus is important for cell growth, proliferation, migration and survival. In addition, can transport lithium Li(+) and also functions as a Na(+)/Li(+) antiporter. SLC9A1 also functions in membrane anchoring and organization of scaffolding complexes that coordinate signaling inputs. The chain is Sodium/hydrogen exchanger 1 (SLC9A1) from Cricetulus griseus (Chinese hamster).